We begin with the raw amino-acid sequence, 261 residues long: Thiazole synthase (261 aa).

The active-site Schiff-base intermediate with DXP is the Lys95. Residues Gly156, 182–183, and 204–205 contribute to the 1-deoxy-D-xylulose 5-phosphate site; these read AG and NT.

The protein belongs to the ThiG family. As to quaternary structure, homotetramer. Forms heterodimers with either ThiH or ThiS.

It localises to the cytoplasm. It carries out the reaction [ThiS sulfur-carrier protein]-C-terminal-Gly-aminoethanethioate + 2-iminoacetate + 1-deoxy-D-xylulose 5-phosphate = [ThiS sulfur-carrier protein]-C-terminal Gly-Gly + 2-[(2R,5Z)-2-carboxy-4-methylthiazol-5(2H)-ylidene]ethyl phosphate + 2 H2O + H(+). It functions in the pathway cofactor biosynthesis; thiamine diphosphate biosynthesis. Functionally, catalyzes the rearrangement of 1-deoxy-D-xylulose 5-phosphate (DXP) to produce the thiazole phosphate moiety of thiamine. Sulfur is provided by the thiocarboxylate moiety of the carrier protein ThiS. In vitro, sulfur can be provided by H(2)S. This Pectobacterium carotovorum subsp. carotovorum (strain PC1) protein is Thiazole synthase.